The chain runs to 210 residues: GEM-like protein 7 (210 aa).

The GRAM domain maps to 88 to 166; sequence KIYKRLFKVC…CKINGVNQSQ (79 aa).

The protein belongs to the GEM family.

The protein is GEM-like protein 7 of Arabidopsis thaliana (Mouse-ear cress).